Reading from the N-terminus, the 506-residue chain is 2,3-bisphosphoglycerate-independent phosphoglycerate mutase (506 aa).

Mn(2+) is bound by residues aspartate 13 and serine 63. Serine 63 (phosphoserine intermediate) is an active-site residue. Substrate contacts are provided by residues histidine 124, arginine 153–aspartate 154, arginine 183, arginine 189, arginine 254–arginine 257, and lysine 330. Aspartate 396, histidine 400, aspartate 437, histidine 438, and histidine 456 together coordinate Mn(2+).

This sequence belongs to the BPG-independent phosphoglycerate mutase family. As to quaternary structure, monomer. Requires Mn(2+) as cofactor.

It carries out the reaction (2R)-2-phosphoglycerate = (2R)-3-phosphoglycerate. Its pathway is carbohydrate degradation; glycolysis; pyruvate from D-glyceraldehyde 3-phosphate: step 3/5. Catalyzes the interconversion of 2-phosphoglycerate and 3-phosphoglycerate. This chain is 2,3-bisphosphoglycerate-independent phosphoglycerate mutase, found in Cereibacter sphaeroides (strain ATCC 17029 / ATH 2.4.9) (Rhodobacter sphaeroides).